The primary structure comprises 317 residues: Inositol oxygenase 4 (317 aa).

Residues Arg58 and 115 to 117 each bind substrate; that span reads DES. Residues His128, His153, and Asp154 each coordinate Fe cation. Substrate contacts are provided by residues Lys157 and 174-175; that span reads GD. Residues His226, His252, and Asp285 each contribute to the Fe cation site. Residue 252–253 coordinates substrate; that stretch reads HS.

This sequence belongs to the myo-inositol oxygenase family. Requires Fe cation as cofactor. Expressed in flowers, leaves, siliques, and to a lesser extent in roots.

Its subcellular location is the cytoplasm. The enzyme catalyses myo-inositol + O2 = D-glucuronate + H2O + H(+). Its pathway is polyol metabolism; myo-inositol degradation into D-glucuronate; D-glucuronate from myo-inositol: step 1/1. In terms of biological role, catalyzes the oxygenative cleavage of myo-inositol to D-glucuronate. Involved in the biosynthesis of UDP-glucuronic acid (UDP-GlcA), providing nucleotide sugars for cell-wall polymers. May be also involved in plant ascorbate biosynthesis. This is Inositol oxygenase 4 (MIOX4) from Arabidopsis thaliana (Mouse-ear cress).